A 683-amino-acid polypeptide reads, in one-letter code: DNA ligase (683 aa).

NAD(+) contacts are provided by residues 44–48, 93–94, and Glu127; these read DAEYD and SL. The N6-AMP-lysine intermediate role is filled by Lys129. The NAD(+) site is built by Arg150, Glu187, Lys302, and Lys326. Residues Cys420, Cys423, Cys438, and Cys444 each contribute to the Zn(2+) site. In terms of domain architecture, BRCT spans 601 to 683; sequence RVGGRLAGLT…SKLLATGGNQ (83 aa).

It belongs to the NAD-dependent DNA ligase family. LigA subfamily. It depends on Mg(2+) as a cofactor. Mn(2+) serves as cofactor.

The catalysed reaction is NAD(+) + (deoxyribonucleotide)n-3'-hydroxyl + 5'-phospho-(deoxyribonucleotide)m = (deoxyribonucleotide)n+m + AMP + beta-nicotinamide D-nucleotide.. Its function is as follows. DNA ligase that catalyzes the formation of phosphodiester linkages between 5'-phosphoryl and 3'-hydroxyl groups in double-stranded DNA using NAD as a coenzyme and as the energy source for the reaction. It is essential for DNA replication and repair of damaged DNA. The polypeptide is DNA ligase (Trichlorobacter lovleyi (strain ATCC BAA-1151 / DSM 17278 / SZ) (Geobacter lovleyi)).